Reading from the N-terminus, the 324-residue chain is Taste receptor type 2 member 116 (324 aa).

Over 1–2 (MN) the chain is Extracellular. The chain crosses the membrane as a helical span at residues 3–23 (GVLYITFTVILSVEVIIGNFG). At 24–55 (NGIIALVNIMDLAKRRKISSVDQILTALAISR) the chain is on the cytoplasmic side. A helical membrane pass occupies residues 56 to 76 (IVLLWLVLVSWWLSMFYPGQW). The Extracellular segment spans residues 77-94 (MTEGIDVIVHNVWTTLNQ). The helical transmembrane segment at 95–115 (ISLWLATSFSVFCFLKVANFS) threads the bilayer. Residues 116–128 (NTIFFYLKIRVKK) lie on the Cytoplasmic side of the membrane. A helical transmembrane segment spans residues 129–149 (VMTGTLIMFLLLLGLNIIVIN). At 150–183 (ASKTILIPEYKVNMSNSLNLKNTQISMLFPFANT) the chain is on the extracellular side. Asn162 carries N-linked (GlcNAc...) asparagine glycosylation. Residues 184-204 (LFGFIPFAVSLVTFLLLFFSL) form a helical membrane-spanning segment. Over 205 to 236 (WKHQRKMHHGAQGCRDSSTKAHIRVLQTLIAS) the chain is Cytoplasmic. Residues 237 to 257 (ILLYFVFFLSLVVKVWISLFL) form a helical membrane-spanning segment. Topologically, residues 258–261 (ERML) are extracellular. A helical membrane pass occupies residues 262-282 (LLLITQAAKIAFPSLHPWVLI). Residues 283–324 (LGNAKLRKASLSALQWLRCRHKDEHRRVQRPEVHSCGSSCMP) lie on the Cytoplasmic side of the membrane.

The protein belongs to the G-protein coupled receptor T2R family.

It localises to the membrane. Putative taste receptor which may play a role in the perception of bitterness. The sequence is that of Taste receptor type 2 member 116 from Rattus norvegicus (Rat).